Reading from the N-terminus, the 276-residue chain is Small ribosomal subunit protein uS2 (276 aa).

The tract at residues 251–276 is disordered; sequence AEEAPAAAEEAPAAEPAAEETPAAEA. Residues 252–276 are compositionally biased toward low complexity; that stretch reads EEAPAAAEEAPAAEPAAEETPAAEA.

Belongs to the universal ribosomal protein uS2 family.

This is Small ribosomal subunit protein uS2 from Jannaschia sp. (strain CCS1).